A 362-amino-acid chain; its full sequence is 3-dehydroquinate synthase (362 aa).

Residues 70-75 (EGEQYK), 104-108 (GVIGD), 128-129 (TT), Lys-141, Lys-150, and 168-171 (TLTT) contribute to the NAD(+) site. 3 residues coordinate Zn(2+): Glu-183, His-246, and His-263.

Belongs to the sugar phosphate cyclases superfamily. Dehydroquinate synthase family. The cofactor is Co(2+). Zn(2+) serves as cofactor. NAD(+) is required as a cofactor.

The protein localises to the cytoplasm. It catalyses the reaction 7-phospho-2-dehydro-3-deoxy-D-arabino-heptonate = 3-dehydroquinate + phosphate. The protein operates within metabolic intermediate biosynthesis; chorismate biosynthesis; chorismate from D-erythrose 4-phosphate and phosphoenolpyruvate: step 2/7. In terms of biological role, catalyzes the conversion of 3-deoxy-D-arabino-heptulosonate 7-phosphate (DAHP) to dehydroquinate (DHQ). In Histophilus somni (strain 129Pt) (Haemophilus somnus), this protein is 3-dehydroquinate synthase.